We begin with the raw amino-acid sequence, 605 residues long: Elongation factor 4 (605 aa).

Residues 11-193 (KNIRNFSIIA…TLVDVIPAPT (183 aa)) form the tr-type G domain. GTP contacts are provided by residues 23–28 (DHGKST) and 140–143 (NKID).

It belongs to the TRAFAC class translation factor GTPase superfamily. Classic translation factor GTPase family. LepA subfamily.

The protein resides in the cell inner membrane. It carries out the reaction GTP + H2O = GDP + phosphate + H(+). Functionally, required for accurate and efficient protein synthesis under certain stress conditions. May act as a fidelity factor of the translation reaction, by catalyzing a one-codon backward translocation of tRNAs on improperly translocated ribosomes. Back-translocation proceeds from a post-translocation (POST) complex to a pre-translocation (PRE) complex, thus giving elongation factor G a second chance to translocate the tRNAs correctly. Binds to ribosomes in a GTP-dependent manner. The protein is Elongation factor 4 of Acinetobacter baumannii (strain SDF).